The following is a 496-amino-acid chain: PE-PGRS family protein PE_PGRS1 (496 aa).

One can recognise a PE domain in the interval 4 to 94 (LITSPATVAA…VCYAAAETAN (91 aa)). Positions 461–480 (LIGNGGDGGPGMFGGPGGAG) are disordered.

This sequence belongs to the mycobacterial PE family. PGRS subfamily.

Its subcellular location is the secreted. It is found in the cell wall. The protein localises to the host mitochondrion. In terms of biological role, when expressed in host mitochondria, induces mitochondrial stress which results in mitochondrial membrane depolarization, up-regulation of mitochondrial superoxides and release of cytochrome-C in the cytoplasm. The cytochrome-C in cytoplasm triggers the activation of caspase-9, caspase-3 and caspase-7, leading to the apoptosis of host macrophages. Being a late expressing protein, apoptosis induction by PE_PGRS1 may facilitate the M.tuberculosis survival and silent expansion of its niche at the site of granuloma. Its function is as follows. When expressed in THP-1 macrophages, promotes the survival of mycobacteria within macrophages after a 24- to 48-hour infection by blocking endoplasmic reticulum stress and inhibiting host cell apoptosis. Can chelate excessive intracellular calcium in THP-1 macrophages, which reduces the concentration of intracellular free Ca(2+) and blocks the PERK-eIF2alpha-ATF4 axis, thereby inhibiting the endoplasmic reticulum stress caused by infection. It also reduces the apoptosis of THP-1 macrophages by decreasing the activation of caspase-3 and caspase-9. This chain is PE-PGRS family protein PE_PGRS1, found in Mycobacterium tuberculosis (strain ATCC 25618 / H37Rv).